We begin with the raw amino-acid sequence, 86 residues long: Cytochrome c oxidase subunit 6B1 (86 aa).

Residue Ala-2 is modified to N-acetylalanine. Positions Thr-27–Trp-73 constitute a CHCH domain. The short motif at Cys-30–Cys-40 is the Cx9C motif element. 2 disulfides stabilise this stretch: Cys-30–Cys-65 and Cys-40–Cys-54. The short motif at Cys-54 to Cys-65 is the Cx10C motif element.

This sequence belongs to the cytochrome c oxidase subunit 6B family. In terms of assembly, component of the cytochrome c oxidase (complex IV, CIV), a multisubunit enzyme composed of 14 subunits. The complex is composed of a catalytic core of 3 subunits MT-CO1, MT-CO2 and MT-CO3, encoded in the mitochondrial DNA, and 11 supernumerary subunits COX4I1 (or COX4I2), COX5A, COX5B, COX6A1 (or COX6A2), COX6B1 (or COX6B2), COX6C, COX7A2 (or COX7A1), COX7B, COX7C, COX8A and NDUFA4, which are encoded in the nuclear genome. The complex exists as a monomer or a dimer and forms supercomplexes (SCs) in the inner mitochondrial membrane with NADH-ubiquinone oxidoreductase (complex I, CI) and ubiquinol-cytochrome c oxidoreductase (cytochrome b-c1 complex, complex III, CIII), resulting in different assemblies (supercomplex SCI(1)III(2)IV(1) and megacomplex MCI(2)III(2)IV(2)).

It localises to the mitochondrion inner membrane. Its pathway is energy metabolism; oxidative phosphorylation. Functionally, component of the cytochrome c oxidase, the last enzyme in the mitochondrial electron transport chain which drives oxidative phosphorylation. The respiratory chain contains 3 multisubunit complexes succinate dehydrogenase (complex II, CII), ubiquinol-cytochrome c oxidoreductase (cytochrome b-c1 complex, complex III, CIII) and cytochrome c oxidase (complex IV, CIV), that cooperate to transfer electrons derived from NADH and succinate to molecular oxygen, creating an electrochemical gradient over the inner membrane that drives transmembrane transport and the ATP synthase. Cytochrome c oxidase is the component of the respiratory chain that catalyzes the reduction of oxygen to water. Electrons originating from reduced cytochrome c in the intermembrane space (IMS) are transferred via the dinuclear copper A center (CU(A)) of subunit 2 and heme A of subunit 1 to the active site in subunit 1, a binuclear center (BNC) formed by heme A3 and copper B (CU(B)). The BNC reduces molecular oxygen to 2 water molecules using 4 electrons from cytochrome c in the IMS and 4 protons from the mitochondrial matrix. This chain is Cytochrome c oxidase subunit 6B1 (COX6B1), found in Homo sapiens (Human).